A 145-amino-acid chain; its full sequence is D-aminoacyl-tRNA deacylase (145 aa).

The Gly-cisPro motif, important for rejection of L-amino acids motif lies at 137–138 (GP).

This sequence belongs to the DTD family. As to quaternary structure, homodimer.

The protein localises to the cytoplasm. The catalysed reaction is glycyl-tRNA(Ala) + H2O = tRNA(Ala) + glycine + H(+). The enzyme catalyses a D-aminoacyl-tRNA + H2O = a tRNA + a D-alpha-amino acid + H(+). Its function is as follows. An aminoacyl-tRNA editing enzyme that deacylates mischarged D-aminoacyl-tRNAs. Also deacylates mischarged glycyl-tRNA(Ala), protecting cells against glycine mischarging by AlaRS. Acts via tRNA-based rather than protein-based catalysis; rejects L-amino acids rather than detecting D-amino acids in the active site. By recycling D-aminoacyl-tRNA to D-amino acids and free tRNA molecules, this enzyme counteracts the toxicity associated with the formation of D-aminoacyl-tRNA entities in vivo and helps enforce protein L-homochirality. In Photobacterium profundum (strain SS9), this protein is D-aminoacyl-tRNA deacylase.